The following is a 1129-amino-acid chain: Phytochrome A type 3 (1129 aa).

The span at 1–21 shows a compositional bias: low complexity; that stretch reads MSSSRPASSSSSRNRQSSQAR. Residues 1–24 are disordered; it reads MSSSRPASSSSSRNRQSSQARVLA. The GAF domain occupies 217-402; the sequence is SMEVLCNTVV…VFAVHVNREF (186 aa). Phytochromobilin is bound at residue C322. 2 consecutive PAS domains span residues 618 to 688 and 748 to 822; these read VTSE…LQGK and VEGD…VSLC. Residues 902–1122 enclose the Histidine kinase domain; that stretch reads YMRHAINNPL…TFIITAELAS (221 aa).

It belongs to the phytochrome family. As to quaternary structure, homodimer. Post-translationally, contains one covalently linked phytochromobilin chromophore.

Functionally, regulatory photoreceptor which exists in two forms that are reversibly interconvertible by light: the Pr form that absorbs maximally in the red region of the spectrum and the Pfr form that absorbs maximally in the far-red region. Photoconversion of Pr to Pfr induces an array of morphogenic responses, whereas reconversion of Pfr to Pr cancels the induction of those responses. Pfr controls the expression of a number of nuclear genes including those encoding the small subunit of ribulose-bisphosphate carboxylase, chlorophyll A/B binding protein, protochlorophyllide reductase, rRNA, etc. It also controls the expression of its own gene(s) in a negative feedback fashion. The chain is Phytochrome A type 3 (PHYA3) from Avena sativa (Oat).